The chain runs to 241 residues: Carboxy-S-adenosyl-L-methionine synthase (241 aa).

Residues Y38, 63–65, 88–89, 116–117, N131, and R198 contribute to the S-adenosyl-L-methionine site; these read GCS, DN, and DI.

It belongs to the class I-like SAM-binding methyltransferase superfamily. Cx-SAM synthase family. In terms of assembly, homodimer.

It carries out the reaction prephenate + S-adenosyl-L-methionine = carboxy-S-adenosyl-L-methionine + 3-phenylpyruvate + H2O. In terms of biological role, catalyzes the conversion of S-adenosyl-L-methionine (SAM) to carboxy-S-adenosyl-L-methionine (Cx-SAM). The chain is Carboxy-S-adenosyl-L-methionine synthase from Mannheimia succiniciproducens (strain KCTC 0769BP / MBEL55E).